The primary structure comprises 4691 residues: Plectin (4691 aa).

Positions 1 to 1478 (MVAGMLMPLD…SELTTLTSQY (1478 aa)) are globular 1. Arginine 21 carries the phosphoserine modification. A Phosphotyrosine modification is found at valine 26. Disordered stretches follow at residues 113–161 (RSPH…TPVV) and 167–186 (GTLA…RDRV). Residues 137 to 154 (DPAREERQVYRRKEREEG) are compositionally biased toward basic and acidic residues. Positions 181-411 (DERDRVQKKT…YVSSLYDAMP (231 aa)) are actin-binding. 2 consecutive Calponin-homology (CH) domains span residues 185 to 293 (RVQK…LHFQ) and 306 to 411 (MTAK…DAMP). The stretch at 653–727 (LQSTQRRPEL…ERARNDESQL (75 aa)) is one Spectrin 1 repeat. Position 728 is a phosphoserine (serine 728). Spectrin repeat units follow at residues 748 to 832 (KLLN…REDH) and 845 to 938 (LQTQ…AIVQ). Threonine 823 carries the post-translational modification Phosphothreonine. In terms of domain architecture, SH3 spans 949–1006 (RGHVPLIAVCDYKQVEVTVHKGDQCQLVGPAQPSHWKVLSGSSSEAAVPSVCFLVPPP). Residues 963–4572 (VEVTVHKGDQ…ARTAQKLRDV (3610 aa)) are required for interaction with intermediate filament proteins. The residue at position 1055 (serine 1055) is a Phosphoserine. The stretch at 1323-1423 (RERVTQLLER…QKFAKQYINA (101 aa)) is one Spectrin 4 repeat. Serine 1443 is modified (phosphoserine). Coiled-coil stretches lie at residues 1477–1697 (QYIK…ERRL) and 1729–2764 (SFAE…TTQA). A central fibrous rod domain region spans residues 1479 to 2762 (IKFISETLRR…ALAHSEIATT (1284 aa)). The segment at 1626–1653 (RAEEAEAQKRQAQEEAERLRRQVQDESQ) is disordered. Serine 1729 is subject to Phosphoserine. Lysine 1733 is subject to N6-acetyllysine. Disordered regions lie at residues 1801 to 1835 (SLAQ…RELA), 2100 to 2141 (AEDT…SLAA), and 2223 to 2317 (RLRS…KHKK). Composition is skewed to basic and acidic residues over residues 1806–1835 (DAEK…RELA), 2100–2116 (AEDT…EAAR), 2124–2136 (EEQR…ERVQ), and 2223–2266 (RLRS…KQSA). Low complexity predominate over residues 2267–2280 (EEQAQAQAQAQAAA). Basic and acidic residues predominate over residues 2281–2296 (EKLRKEAEQEAARRAQ). The residue at position 2639 (serine 2639) is a Phosphoserine. An N6-acetyllysine modification is found at lysine 2644. Residues 2675 to 2728 (LREEQQRQQQQMEQEKQELMASMEEARRRQREAEEGVRRKQEELQHLEQQRQQQ) form a disordered region. Residues 2687–2728 (EQEKQELMASMEEARRRQREAEEGVRRKQEELQHLEQQRQQQ) show a composition bias toward basic and acidic residues. A globular 2 region spans residues 2763-4691 (QAASTKALPN…SLGGPESAVA (1929 aa)). Serine 2781 carries the phosphoserine modification. Position 2788 is a phosphotyrosine (tyrosine 2788). Plectin repeat units lie at residues 2795-2832 (QKVP…REDV), 2833-2870 (YRYL…PGTA), 2871-2908 (LILL…PELH), 2909-2946 (HKLL…RDHG), 2947-2984 (VRLL…EEMN), and 2988-3022 (SDPS…PETG). Position 2809 is a phosphoserine (serine 2809). Threonine 2893 bears the Phosphothreonine mark. Tyrosine 3040 is modified (phosphotyrosine). Residues lysine 3060 and lysine 3098 each carry the N6-acetyllysine modification. 6 Plectin repeats span residues 3123–3160 (ALVP…ADSV), 3161–3198 (RQAL…PEVA), 3199–3236 (VALL…PELH), 3237–3274 (EKLL…REQG), 3275–3312 (LRLL…KETN), and 3315–3350 (LTSP…QLTG). Basic and acidic residues predominate over residues 3312–3326 (NRALTSPRDDARVYH). Positions 3312-3338 (NRALTSPRDDARVYHDPSTQEPVTYSQ) are disordered. Residues 3328 to 3338 (PSTQEPVTYSQ) are compositionally biased toward polar residues. Position 3369 is a phosphotyrosine (tyrosine 3369). Lysine 3427 carries the N6-acetyllysine modification. Plectin repeat units lie at residues 3492–3529 (RTLL…PSTA), 3530–3567 (TLLL…PELH), 3568–3605 (EKLL…RDHA), 3606–3643 (IRLL…EEMN), and 3647–3681 (ADPS…PETG). Threonine 3792 bears the Phosphothreonine mark. Phosphotyrosine is present on tyrosine 3797. 5 Plectin repeats span residues 3827 to 3864 (WRYL…AEVA), 3865 to 3902 (RLLL…PELH), 3903 to 3940 (DRLL…AEEA), 3941 to 3978 (LRLL…KDTH), and 3982 to 4015 (SEPS…DPSG). Residues 3954-4291 (VDPRLGFHLP…KRRVVIVDPE (338 aa)) are required for interaction with type2 keratins, DES and VIM. Threonine 4037 is subject to Phosphothreonine. Position 4061 is a phosphoserine (serine 4061). Plectin repeat units follow at residues 4070-4107 (QKFL…PGTA), 4108-4145 (FELL…PEFK), 4146-4183 (DKLL…KDHG), 4184-4221 (IRLL…EEMN), 4225-4259 (TDPS…PQTG), and 4272-4312 (RKTS…HQTY). A binding to intermediate filaments region spans residues 4257-4307 (QTGLCLLPLKEKKRERKTSSKSSVRKRRVVIVDPETGKEMSVYEAYRKGLI). The segment at 4387-4420 (FRSRSSSVGSSSSYPISSAGPRTQLASWSDPTEE) is disordered. Phosphoserine is present on residues serine 4389, serine 4391, serine 4392, serine 4393, serine 4396, serine 4397, serine 4398, and serine 4399. Low complexity predominate over residues 4389 to 4404 (SRSSSVGSSSSYPISS). The residue at position 4400 (tyrosine 4400) is a Phosphotyrosine. 2 positions are modified to phosphoserine: serine 4403 and serine 4413. Residues 4406-4416 (GPRTQLASWSD) are compositionally biased toward polar residues. 5 Plectin repeats span residues 4415–4452 (SDPT…NITG), 4453–4490 (QRLL…KIMV), 4491–4528 (DRIN…YEAG), 4529–4566 (QRFL…ARTA), and 4567–4604 (QKLR…EGTG). Threonine 4418 bears the Phosphothreonine mark. The required for efficient interaction with KRT5 and KRT14 heterodimers stretch occupies residues 4503–4572 (FEDPRTKTKM…ARTAQKLRDV (70 aa)). Threonine 4546 carries the phosphothreonine; by CDK1 modification. Residues serine 4614 and serine 4620 each carry the phosphoserine modification. The span at 4618–4678 (YYSPYSVSGS…SGYGRRYASG (61 aa)) shows a compositional bias: low complexity. Positions 4618–4691 (YYSPYSVSGS…SLGGPESAVA (74 aa)) are disordered. Position 4622 is a phosphotyrosine (tyrosine 4622). 3 positions are modified to phosphoserine: serine 4623, serine 4625, and serine 4629. Residue threonine 4630 is modified to Phosphothreonine. A 4 X 4 AA tandem repeats of G-S-R-X region spans residues 4632 to 4647 (GSRTGSRTGSRAGSRR). At serine 4633 the chain carries Phosphoserine. Omega-N-methylarginine is present on residues arginine 4634 and arginine 4647. 2 positions are modified to phosphoserine: serine 4649 and serine 4682.

The protein belongs to the plakin or cytolinker family. As to quaternary structure, homodimer or homotetramer. Interacts (via actin-binding domain) with SYNE3. Interacts (via calponin-homology (CH) 1 domain) with VIM (via rod region). Interacts (via N-terminus) with DST isoform 2 (via N-terminus). Interacts with FER. Interacts with TOR1A. Interacts with ANK3. Identified in complexes that contain VIM, EZR, AHNAK, BFSP1, BFSP2, ANK2, PLEC, PRX and spectrin. Interacts with KRT14, heterodimers consisting of KRT8 and KRT18, heterodimers consisting of KRT5 and KRT14, heterodimers consisting of KRT14 and KRT15, and heterodimers consisting of KRT1 and KRT10. Interacts with DES and VIM. Phosphorylated by CDK1; regulates dissociation from intermediate filaments during mitosis. Isoform PLEC-1A is phosphorylated on Ser-21. Isoform PLEC-1A is phosphorylated on Tyr-26. As to expression, detected in eye lens fiber cells (at protein level). Expressed at high levels in lung, brain, small intestine, muscle, heart and skin with lower levels found in kidney, liver, uterus, spleen and salivary gland.

It is found in the cytoplasm. The protein localises to the cytoskeleton. Its subcellular location is the cell junction. It localises to the hemidesmosome. The protein resides in the cell projection. It is found in the podosome. Functionally, interlinks intermediate filaments with microtubules and microfilaments and anchors intermediate filaments to desmosomes or hemidesmosomes. May be involved not only in the cross-linking and stabilization of cytoskeletal intermediate filaments network, but also in the regulation of their dynamics. This is Plectin (Plec) from Mus musculus (Mouse).